The following is a 581-amino-acid chain: MPVKRYLPFEVEVEDITLPDRTWPDKKITQAPQWCAVDLRDGNQALIDPMSPERKRRMFELLVKMGFKEIEVGFPSASQTDFDFVREIIEKNMIPDDVTIQVLVQAREHLIRRTFEACEGAKNVIVHFYNSTSILQRDVVFRMNKDQVKTLATDAAELIKTIAQDYPDTNWRWEYSPESYTGTEVEYAKEVVDAVVEVMDPTPENPIIINLPATVEMITPNVYADSIEWMHRNLNRRDSIILSLHPHNDRGTGVAAAELGYMAGADRIEGCLFGNGERTGNVCLVTLALNMLTQGVDPQLDFSDIKHIRRTVEYCNQLRVPERHPYGGDLVFTAFSGSHQDAINKGLDALAAKVKPGASSTEVAWEELRSTEWEVPYLPIDPKDVGRDYEAVIRVNSQSGKGGVAYIMKTDHGLKMPRSMQVEFSAVVQNVTDAEGGEVNSKEMWDIFATEYLDRSAPVEQIALRVENAQTENDDATITAELVVDGENQTVSGRGNGPLAAYANALESLNIDVEIQEYSQHARTSGDDAEAAAYVLAEVNGRMVWGVGIAGSITYASLKAVTSAVNRALDFKHQQLQNGGV.

The region spanning proline 32–lysine 306 is the Pyruvate carboxyltransferase domain. Mg(2+)-binding residues include aspartate 41, histidine 245, histidine 247, and asparagine 281. The tract at residues arginine 455–valine 581 is regulatory domain.

This sequence belongs to the alpha-IPM synthase/homocitrate synthase family. LeuA type 2 subfamily. Homodimer. It depends on Mg(2+) as a cofactor.

It localises to the cytoplasm. It catalyses the reaction 3-methyl-2-oxobutanoate + acetyl-CoA + H2O = (2S)-2-isopropylmalate + CoA + H(+). Its pathway is amino-acid biosynthesis; L-leucine biosynthesis; L-leucine from 3-methyl-2-oxobutanoate: step 1/4. In terms of biological role, catalyzes the condensation of the acetyl group of acetyl-CoA with 3-methyl-2-oxobutanoate (2-ketoisovalerate) to form 3-carboxy-3-hydroxy-4-methylpentanoate (2-isopropylmalate). In Corynebacterium efficiens (strain DSM 44549 / YS-314 / AJ 12310 / JCM 11189 / NBRC 100395), this protein is 2-isopropylmalate synthase.